The primary structure comprises 340 residues: Tryptophan--tRNA ligase (340 aa).

Residues 11–13 and 19–20 contribute to the ATP site; these read RPT and GH. Positions 12 to 20 match the 'HIGH' region motif; it reads PTGKLHLGH. Asp-140 is a binding site for L-tryptophan. ATP contacts are provided by residues 152 to 154, Leu-194, and 202 to 206; these read GND and KMSKS. Positions 202-206 match the 'KMSKS' region motif; sequence KMSKS.

The protein belongs to the class-I aminoacyl-tRNA synthetase family. As to quaternary structure, homodimer.

It localises to the cytoplasm. The enzyme catalyses tRNA(Trp) + L-tryptophan + ATP = L-tryptophyl-tRNA(Trp) + AMP + diphosphate + H(+). Catalyzes the attachment of tryptophan to tRNA(Trp). In Streptococcus pyogenes serotype M1, this protein is Tryptophan--tRNA ligase.